The following is a 491-amino-acid chain: Glutamyl-tRNA(Gln) amidotransferase subunit A (491 aa).

Active-site charge relay system residues include Lys-77 and Ser-152. Catalysis depends on Ser-176, which acts as the Acyl-ester intermediate.

The protein belongs to the amidase family. GatA subfamily. In terms of assembly, heterotrimer of A, B and C subunits.

The catalysed reaction is L-glutamyl-tRNA(Gln) + L-glutamine + ATP + H2O = L-glutaminyl-tRNA(Gln) + L-glutamate + ADP + phosphate + H(+). In terms of biological role, allows the formation of correctly charged Gln-tRNA(Gln) through the transamidation of misacylated Glu-tRNA(Gln) in organisms which lack glutaminyl-tRNA synthetase. The reaction takes place in the presence of glutamine and ATP through an activated gamma-phospho-Glu-tRNA(Gln). The chain is Glutamyl-tRNA(Gln) amidotransferase subunit A from Chlamydia abortus (strain DSM 27085 / S26/3) (Chlamydophila abortus).